Here is an 868-residue protein sequence, read N- to C-terminus: Pentatricopeptide repeat-containing protein At2g27610 (868 aa).

PPR repeat units follow at residues 57-91, 92-126, 127-157, 158-192, 193-227, 228-258, 259-293, 294-328, 329-359, 361-395, 396-426, 427-457, 458-492, 493-528, 529-559, 560-594, 595-625, and 631-661; these read DRES…GMEM, DCSI…GFLD, DVSV…MKER, NVVT…GTQP, NSFT…GLDK, TIPV…TEVK, SVVT…YVRL, SESS…GFLF, DQNI…IGCV, NVVS…GVRP, NEFT…NYER, SSTV…IDDK, DIVA…GIKP, NEFT…RLDS, SLCV…QREK, DLVS…KVKM, DGVT…MVRD, and TKEH…MPNP. A type E motif region spans residues 666–741; it reads IWRTILAACR…EPGYSWIEVK (76 aa). Residues 742 to 772 form a type E(+) motif region; that stretch reads NKTYSFLAGDRSHPLKDQIYMKLEDLSTRLK. Residues 773–868 are type DYW motif; that stretch reads DLGYEPDTSY…DGVCSCGDFW (96 aa).

It belongs to the PPR family. PCMP-H subfamily.

This chain is Pentatricopeptide repeat-containing protein At2g27610 (PCMP-H60), found in Arabidopsis thaliana (Mouse-ear cress).